A 217-amino-acid chain; its full sequence is MESVALYSFQATESDELAFNKGDTLKILNMEDDQNWYKAELRGAEGFVPKNYIRVKPHPWYSGRISRQLAEETLMKRNHLGAFLIRESESSPGEFSVSVNYGDQVQHFKVLREASGKYFLWEEKFNSLNELVDFYRTTTIAKRRQIFLCDEQPLIKPSRACFAQAQFDFSAQDPSQLSLRRGDIVEVVEREDPHWWRGRAGGRLGFFPRSYVQPVHL.

An SH3 1 domain is found at 1–58 (MESVALYSFQATESDELAFNKGDTLKILNMEDDQNWYKAELRGAEGFVPKNYIRVKPH). One can recognise an SH2 domain in the interval 60 to 152 (WYSGRISRQL…RRQIFLCDEQ (93 aa)). The 60-residue stretch at 158–217 (SRACFAQAQFDFSAQDPSQLSLRRGDIVEVVEREDPHWWRGRAGGRLGFFPRSYVQPVHL) folds into the SH3 2 domain.

This sequence belongs to the GRB2/sem-5/DRK family. In terms of assembly, associates through its SH2 domain with ligand-activated receptors for stem cell factor (KIT) and erythropoietin (EPOR). Also forms a stable complex with the Bcr-Abl oncoprotein. GRAP is associated with the Ras guanine nucleotide exchange factor SOS1, primarily through its N-terminal SH3 domain. Interacts with phosphorylated LAT upon TCR activation. Interacts with SHB. As to expression, expressed in inner ear, in neruonal fibers innervating cochlear and utricular auditory hair cells (at protein level).

Its subcellular location is the membrane. It localises to the synapse. Its function is as follows. Couples signals from receptor and cytoplasmic tyrosine kinases to the Ras signaling pathway. Plays a role in the inner ear and in hearing. This is GRB2-related adapter protein from Mus musculus (Mouse).